The following is a 318-amino-acid chain: Formimidoylglutamase (318 aa).

Mn(2+)-binding residues include His-130, Asp-155, His-157, Asp-159, Asp-246, and Asp-248.

Belongs to the arginase family. It depends on Mn(2+) as a cofactor.

The catalysed reaction is N-formimidoyl-L-glutamate + H2O = formamide + L-glutamate. It functions in the pathway amino-acid degradation; L-histidine degradation into L-glutamate; L-glutamate from N-formimidoyl-L-glutamate (hydrolase route): step 1/1. Functionally, catalyzes the conversion of N-formimidoyl-L-glutamate to L-glutamate and formamide. The chain is Formimidoylglutamase from Klebsiella pneumoniae subsp. pneumoniae (strain ATCC 700721 / MGH 78578).